We begin with the raw amino-acid sequence, 1212 residues long: Periplasmic/secreted acid trehalase ATH1 (1212 aa).

Over 1 to 82 (MGFKDKILFW…STRVKIRRQN (82 aa)) the chain is Cytoplasmic. The helical transmembrane segment at 83–103 (ILNTTLILGMLIALVIWTAIL) threads the bilayer. Residues 104-1212 (STNSYFSSSL…ATIREIVLQE (1109 aa)) are Periplasmic-facing. N-linked (GlcNAc...) asparagine glycosylation is found at N243, N275, N296, N362, N414, N428, and N521. 546–547 (WD) provides a ligand contact to substrate. Residues N572, N601, N661, and N671 are each glycosylated (N-linked (GlcNAc...) asparagine). E677 acts as the Proton donor in catalysis. Residues N729 and N738 are each glycosylated (N-linked (GlcNAc...) asparagine). Substrate is bound at residue 744–745 (KQ). N912, N938, N993, N1011, N1033, N1052, N1070, N1097, and N1165 each carry an N-linked (GlcNAc...) asparagine glycan.

It belongs to the glycosyl hydrolase 65 family. In terms of assembly, homodimer.

It is found in the secreted. The protein resides in the periplasm. It localises to the membrane. It carries out the reaction alpha,alpha-trehalose + H2O = alpha-D-glucose + beta-D-glucose. In terms of biological role, periplasmic/secreted acid trehalase that catalyzes hydrolysis of the disaccharide trehalose and required for growth on trehalose as carbon source. Growth on trehalose is not restricted to respiration. This Candida glabrata (Yeast) protein is Periplasmic/secreted acid trehalase ATH1.